Consider the following 555-residue polypeptide: uncharacterized protein (555 aa).

ABC transporter domains are found at residues 4-244 (VKVK…PPYK) and 255-547 (IQVR…ARFM). ATP-binding positions include 36-43 (GKSGAGKS) and 292-299 (GPSGVGKT).

The protein belongs to the ABC transporter superfamily.

This is an uncharacterized protein from Methanocaldococcus jannaschii (strain ATCC 43067 / DSM 2661 / JAL-1 / JCM 10045 / NBRC 100440) (Methanococcus jannaschii).